Reading from the N-terminus, the 867-residue chain is Zinc finger protein zfp-1 (867 aa).

The PHD-type 1 zinc-finger motif lies at 5 to 57; the sequence is VGGCCVCADENGWTDNPLIYCDGENCEVAVHQGCYGIQEVPEGEWFCAKCTKA. The C2HC pre-PHD-type 2 zinc-finger motif lies at 69–102; the sequence is TFCCQLCPFDYGALKKTDRNGWAHVICALYIPEV. Positions 69–186 are extended PHD2 domain (ePHD2); sequence TFCCQLCPFD…KYCGYCENHL (118 aa). The PHD-type 2 zinc-finger motif lies at 125–186; that stretch reads KLCYICNEER…KYCGYCENHL (62 aa). Disordered stretches follow at residues 267–311, 440–477, 503–586, and 753–773; these read GSTV…SLSS, KNDMMDKTHKRPRANARPPAVLGSMSSGSSGGTVGKSP, ADRT…QSNR, and SSGAPVNSNIQNHRATPSTAG. Over residues 285-311 the composition is skewed to polar residues; sequence PLTTSSRSSVAQDPSPPLTINKNSLSS. A compositionally biased stretch (basic and acidic residues) spans 503–512; that stretch reads ADRTAAERRA. Residues 516–527 show a composition bias toward polar residues; it reads QSQPSTSTNGGP. Positions 538 to 550 are enriched in low complexity; the sequence is HTNSTNSTNHQNN. Residues 551–573 are compositionally biased toward polar residues; that stretch reads GLTQNAPASTSMQAGTSSNDGVI. A compositionally biased stretch (low complexity) spans 574 to 585; that stretch reads SQNGTSSTSQSN. Over residues 758–771 the composition is skewed to polar residues; it reads VNSNIQNHRATPST.

In terms of assembly, multimer; in vitro. Interacts (via C-terminus) with dot-1.1 to form a heterodimer known as the zfp-1-dot-1.1 complex or DotCom complex. In terms of tissue distribution, isoform a: Expressed at high levels in maturing oocytes, but at low levels in the rest of the germ line (at protein level). Isoform a: Not expressed in the pharynx, germ line and tail. Isoform c: Not expressed in the germ line (at protein level). Isoform c: Uniformly expressed.

It localises to the nucleus. Its subcellular location is the chromosome. Functionally, recruits the histone methyltransferase dot-1.1 to chromatin to methylate 'Lys-79' of histone H3 and activate transcription. Recognizes and binds histone H3 methylated at 'Lys-4' (H3K4me) at the promoters of target genes. During stress, the zfp-1-dot-1.1 complex also plays a role in the deubiquitination of histone H2B sites, which negatively modulates the RNA polymerase II-induced transcription of highly expressed genes. In response to stress, binds to the pdk-1 promoter to negatively regulate pdk-1 expression, which negatively modulates daf-16/FOXO-mediated gene expression. Thus, most likely via this mechanism, in response to stress, it confers a protective role against neuronal necrosis. Plays a role in Insulin/IGF-1-like signaling (IIS)- and diet restriction-mediated lifespan extension by controlling daf-16/FOXO and pha-4/FOXA recruitment to target promoters. May negatively regulate the expression of genes required for vulval development. May play a role in axon guidance in D-type motor neurons. May suppress sensitivity to RNAi. Its function is as follows. Required for migration of HSN motor neurons during embryogenesis. This Caenorhabditis elegans protein is Zinc finger protein zfp-1.